Consider the following 574-residue polypeptide: 4-oxocyclohexanecarboxylate 2-dehydrogenase (574 aa).

Belongs to the FAD-dependent oxidoreductase 2 family. In terms of assembly, monomer. Homodimer. FAD is required as a cofactor.

It catalyses the reaction 4-oxocyclohexane-1-carboxylate + O2 = 4-oxocyclohex-2-ene-1-carboxylate + H2O2. With respect to regulation, inhibited by 5,5'-dithio-bis(2- nitrobenzoate) and N-bromosuccinimide, but not by thiol and chelating reagents. Functionally, desaturase involved in a cyclohexanecarboxylate (CHCA) degradation pathway. Catalyzes the conversion of 4-oxocyclohexanecarboxylate (4-oxoCHCA) to 4-oxocyclohexenecarboxylate. Is highly specific for 4-oxocyclohexanecarboxylic acid and shows only slight activity with 4-oxo-2-methylcyclohex-2-enecarboxylic acid. The sequence is that of 4-oxocyclohexanecarboxylate 2-dehydrogenase from Sinomonas cyclohexanicum (Corynebacterium cyclohexanicum).